Here is a 143-residue protein sequence, read N- to C-terminus: Transcriptional regulator MraZ (143 aa).

2 SpoVT-AbrB domains span residues 5–47 (SHTP…PMAE) and 76–119 (AADD…DAQR).

Belongs to the MraZ family. In terms of assembly, forms oligomers.

Its subcellular location is the cytoplasm. The protein localises to the nucleoid. The chain is Transcriptional regulator MraZ from Frankia alni (strain DSM 45986 / CECT 9034 / ACN14a).